The chain runs to 299 residues: GTP cyclohydrolase FolE2 (299 aa).

The segment at 1–25 is disordered; sequence MKTKQWPSKTERHKRFGSVPPVAGK.

Belongs to the GTP cyclohydrolase IV family.

It catalyses the reaction GTP + H2O = 7,8-dihydroneopterin 3'-triphosphate + formate + H(+). The protein operates within cofactor biosynthesis; 7,8-dihydroneopterin triphosphate biosynthesis; 7,8-dihydroneopterin triphosphate from GTP: step 1/1. Functionally, converts GTP to 7,8-dihydroneopterin triphosphate. In Halalkalibacterium halodurans (strain ATCC BAA-125 / DSM 18197 / FERM 7344 / JCM 9153 / C-125) (Bacillus halodurans), this protein is GTP cyclohydrolase FolE2.